The sequence spans 77 residues: Metallothionein-like protein 2B (77 aa).

Belongs to the metallothionein superfamily. Type 15 family. Expressed in vascular tissues of all organs. Expressed in root and leaf phloem, pollen and root hairs.

Functionally, metallothioneins have a high content of cysteine residues that bind various heavy metals. Functions as a metal chelator of copper (Cu) and zinc (Zn). Functions cooperatively with the phytochelatin synthase PCS1 to protect plants from Cu and cadmium toxicity. Plays a role in Cu homeostasis, specifically in the remobilization of Cu from senescing leaves. The mobilization of Cu from internal sources is important for seed development. This chain is Metallothionein-like protein 2B (MT2B), found in Arabidopsis thaliana (Mouse-ear cress).